A 255-amino-acid polypeptide reads, in one-letter code: 5-oxoprolinase subunit A (255 aa).

The protein belongs to the LamB/PxpA family. Forms a complex composed of PxpA, PxpB and PxpC.

It carries out the reaction 5-oxo-L-proline + ATP + 2 H2O = L-glutamate + ADP + phosphate + H(+). Catalyzes the cleavage of 5-oxoproline to form L-glutamate coupled to the hydrolysis of ATP to ADP and inorganic phosphate. This chain is 5-oxoprolinase subunit A, found in Pyrococcus furiosus (strain ATCC 43587 / DSM 3638 / JCM 8422 / Vc1).